A 365-amino-acid chain; its full sequence is Caffeic acid 3-O-methyltransferase 1 (365 aa).

130–136 (MNQDKVL) lines the substrate pocket. The tract at residues 162–180 (AFEYHGTDPRFNKVFNKGM) is substrate binding. 5 residues coordinate S-adenosyl-L-methionine: G208, D231, D251, M252, and K265. Residue H269 is the Proton acceptor of the active site.

This sequence belongs to the class I-like SAM-binding methyltransferase superfamily. Cation-independent O-methyltransferase family. COMT subfamily. In terms of assembly, homodimer.

It catalyses the reaction (E)-caffeate + S-adenosyl-L-methionine = (E)-ferulate + S-adenosyl-L-homocysteine + H(+). Its pathway is aromatic compound metabolism; phenylpropanoid biosynthesis. Catalyzes the conversion of caffeic acid to ferulic acid and of 5-hydroxyferulic acid to sinapic acid. The resulting products may subsequently be converted to the corresponding alcohols that are incorporated into lignins. This chain is Caffeic acid 3-O-methyltransferase 1 (HOMT1), found in Populus kitakamiensis (Aspen).